A 242-amino-acid polypeptide reads, in one-letter code: 3-dehydroquinate dehydratase (242 aa).

3-dehydroquinate-binding positions include 39 to 41 (EIR) and Arg-73. The active-site Proton donor/acceptor is His-135. Lys-162 acts as the Schiff-base intermediate with substrate in catalysis. 3-dehydroquinate is bound by residues Arg-203 and Gln-228.

It belongs to the type-I 3-dehydroquinase family. Homodimer.

It catalyses the reaction 3-dehydroquinate = 3-dehydroshikimate + H2O. It participates in metabolic intermediate biosynthesis; chorismate biosynthesis; chorismate from D-erythrose 4-phosphate and phosphoenolpyruvate: step 3/7. In terms of biological role, involved in the third step of the chorismate pathway, which leads to the biosynthesis of aromatic amino acids. Catalyzes the cis-dehydration of 3-dehydroquinate (DHQ) and introduces the first double bond of the aromatic ring to yield 3-dehydroshikimate. In Methanosarcina mazei (strain ATCC BAA-159 / DSM 3647 / Goe1 / Go1 / JCM 11833 / OCM 88) (Methanosarcina frisia), this protein is 3-dehydroquinate dehydratase.